Consider the following 833-residue polypeptide: Phosphatidylinositol-3-phosphatase myotubularin-2 (833 aa).

A GRAM domain is found at 42-109 (GSYSNLDCLL…VAIEKFNKLA (68 aa)). Residues 181 to 647 (TNPKERLLNE…LAPTLWPQFH (467 aa)) enclose the Myotubularin phosphatase domain. Substrate-binding positions include 329 to 332 (NGAK), 354 to 355 (NI), 440 to 446 (CSDGWDR), and R486. Catalysis depends on C440, which acts as the Phosphocysteine intermediate. The segment at 503–530 (QSSSARSFPSSPVRQSPGSAAAQSSSSS) is disordered. Low complexity predominate over residues 504–530 (SSSARSFPSSPVRQSPGSAAAQSSSSS). A coiled-coil region spans residues 660 to 717 (ETEDQCRAMTVKYSEMKKEKEEAERKVDELSSAMESLNEELLNERDISRAARESAKRA). Residues 753 to 772 (KCSHSIPQKQSEDNTTDVSE) form a disordered region.

Belongs to the protein-tyrosine phosphatase family. Non-receptor class myotubularin subfamily. Mostly expressed in flowers and roots, and, to a lower extent, in siliques and leaves.

Its subcellular location is the cytoplasm. The catalysed reaction is a 1,2-diacyl-sn-glycero-3-phospho-(1D-myo-inositol-3-phosphate) + H2O = a 1,2-diacyl-sn-glycero-3-phospho-(1D-myo-inositol) + phosphate. It catalyses the reaction a 1,2-diacyl-sn-glycero-3-phospho-(1D-myo-inositol-3,5-bisphosphate) + H2O = a 1,2-diacyl-sn-glycero-3-phospho-(1D-myo-inositol-5-phosphate) + phosphate. Phosphatase with phosphoinositide 3'-phosphatase activity that can use phosphatidylinositol-3-phosphate (PtdIns3P) and phosphatidylinositol-3,5-diphosphate (PtdIns3,5P(2)) as substrates and produces phosphatidylinositol-5-phosphate (PtdIns5P); participates in pathway(s) that transfer gene regulatory signals to the nucleus. This is Phosphatidylinositol-3-phosphatase myotubularin-2 (MTM2) from Arabidopsis thaliana (Mouse-ear cress).